A 293-amino-acid chain; its full sequence is Large ribosomal subunit protein uL18 (293 aa).

Residues 249 to 273 form a disordered region; that stretch reads DASPAAKKAAKPSKRHTAKRLTYDE. Residues 256–267 are compositionally biased toward basic residues; it reads KAAKPSKRHTAK.

This sequence belongs to the universal ribosomal protein uL18 family. As to quaternary structure, component of the large ribosomal subunit (LSU).

It is found in the cytoplasm. The protein localises to the nucleus. Its function is as follows. Component of the ribosome, a large ribonucleoprotein complex responsible for the synthesis of proteins in the cell. The small ribosomal subunit (SSU) binds messenger RNAs (mRNAs) and translates the encoded message by selecting cognate aminoacyl-transfer RNA (tRNA) molecules. The large subunit (LSU) contains the ribosomal catalytic site termed the peptidyl transferase center (PTC), which catalyzes the formation of peptide bonds, thereby polymerizing the amino acids delivered by tRNAs into a polypeptide chain. The nascent polypeptides leave the ribosome through a tunnel in the LSU and interact with protein factors that function in enzymatic processing, targeting, and the membrane insertion of nascent chains at the exit of the ribosomal tunnel. In Caenorhabditis elegans, this protein is Large ribosomal subunit protein uL18 (rpl-5).